We begin with the raw amino-acid sequence, 1226 residues long: MYGQVERKRVNFGKITNLDYLPNLIQIQKRSFDWFLQADVKDETKRKHQGLEAVFRETFPIESPNNDMIMEYSHYILGEPKRSPQECKDTDATFAMPLKAVIRLIIKETGEIREQTVYMGDLPVMTEQGTFIINGAERVVVSQLHRSPGIFFSYDMERDVFSARVIPYRGSWLEFEMDNKGILIAKIDRKKKFPATLLIKSLGHGTNEEVLRLFYSSKKEKIAGATSKDLKKILGRRTINDIINMETGEVMLEAGSKVNEDNISILKEMKVKEVELIEFPKGKDNPILINALEKDGVNDYEDAILKFHSLMRQGEPSTIENATTELTRLFFSPKTFDLGEVGRYKINSKFEFNNPKEFSGEKARVLRPADIIETVRYILNLFSETENYYPDDIDHLGNRRIRSVGELISNQLKTGFSRVERVIKERMTVQEIETQTPQLLISIKPITAVINEFFGSSQLSQFMDQTNPLAELTHKRRLNALGPGGLSRDRAGMEVRDVHYSHYGRMCPIETPEGPNIGLILSMSSYARVNDYGFLETPYRTVKNGKVTGQIEHLTADKEEYHYIAQASGVIDEKGELKNKLISTRHRGDFPFRNPSEIQYMDLAPLQVVSVSTALIPFLEHDDANRALMGSNMQRQAVPLLREEAPFVGTGMETRAAYDSRICIVNKHDGVVTSVDAETIVVERKGGKESDTYSLTKFKKTNQGTCFNQKPIVGVVHSEINGKVSKVSKEKIEVTGENGELKEYVLQIGSKQYAPIVSSGEEVKRGTTLAGQVVVGEKLDEMGNILVKGTVLADGPAVDNGVLALGRNVLAAFMPWEGYNFEDAILISERIVRDDVFSSIHIEEFEIQARETKLGPEQITRDIPNLSDKAFRDLDETGVIRIGAEVKPGDILVGMVTPKGETDLTPEYKLLHSIFGEKAKDVRDSSLRMPNGFEGTVIDIKRFSRENQDELPAGVEEMVKVFVARKRKLLVGDKMAGRHGNKGVVARVMAEEDMPYMEDGTPLDIVLNPLGVPSRMNLGQIFETQLGFAASKLGISFETPVFDGAEESDVDNFCKEANLPLNSKFKLYDGRTGLPFMNEVFCGYIYILKLAHLVEDKIHARSTGPYSLVTQQPLGGKAQFGGQRLGEMEVWALEAYGASHTLQELLTIKSDDMLGRARIYEAIVKGIHSIKPGIPESFNVLVQELRGLALDIIITDSEGNTVDISDYEDEYSKSKKKIKFETIENA.

This sequence belongs to the RNA polymerase beta chain family. As to quaternary structure, the RNAP catalytic core consists of 2 alpha, 1 beta, 1 beta' and 1 omega subunit. When a sigma factor is associated with the core the holoenzyme is formed, which can initiate transcription.

It carries out the reaction RNA(n) + a ribonucleoside 5'-triphosphate = RNA(n+1) + diphosphate. DNA-dependent RNA polymerase catalyzes the transcription of DNA into RNA using the four ribonucleoside triphosphates as substrates. This chain is DNA-directed RNA polymerase subunit beta, found in Leptospira borgpetersenii serovar Hardjo-bovis (strain JB197).